A 121-amino-acid polypeptide reads, in one-letter code: NAD(P)H-quinone oxidoreductase subunit M (121 aa).

It belongs to the complex I NdhM subunit family. As to quaternary structure, NDH-1 can be composed of about 15 different subunits; different subcomplexes with different compositions have been identified which probably have different functions.

The protein resides in the cellular thylakoid membrane. The enzyme catalyses a plastoquinone + NADH + (n+1) H(+)(in) = a plastoquinol + NAD(+) + n H(+)(out). It carries out the reaction a plastoquinone + NADPH + (n+1) H(+)(in) = a plastoquinol + NADP(+) + n H(+)(out). NDH-1 shuttles electrons from an unknown electron donor, via FMN and iron-sulfur (Fe-S) centers, to quinones in the respiratory and/or the photosynthetic chain. The immediate electron acceptor for the enzyme in this species is believed to be plastoquinone. Couples the redox reaction to proton translocation, and thus conserves the redox energy in a proton gradient. Cyanobacterial NDH-1 also plays a role in inorganic carbon-concentration. The protein is NAD(P)H-quinone oxidoreductase subunit M of Synechococcus sp. (strain JA-2-3B'a(2-13)) (Cyanobacteria bacterium Yellowstone B-Prime).